A 433-amino-acid chain; its full sequence is 3-phosphoshikimate 1-carboxyvinyltransferase (433 aa).

Positions 21, 22, and 26 each coordinate 3-phosphoshikimate. Residue lysine 21 participates in phosphoenolpyruvate binding. Phosphoenolpyruvate-binding residues include glycine 96 and arginine 124. 3-phosphoshikimate contacts are provided by serine 167, serine 168, glutamine 169, serine 195, aspartate 310, and lysine 337. Glutamine 169 contributes to the phosphoenolpyruvate binding site. Residue aspartate 310 is the Proton acceptor of the active site. Phosphoenolpyruvate contacts are provided by arginine 341, arginine 384, and lysine 410.

It belongs to the EPSP synthase family. In terms of assembly, monomer.

Its subcellular location is the cytoplasm. The catalysed reaction is 3-phosphoshikimate + phosphoenolpyruvate = 5-O-(1-carboxyvinyl)-3-phosphoshikimate + phosphate. The protein operates within metabolic intermediate biosynthesis; chorismate biosynthesis; chorismate from D-erythrose 4-phosphate and phosphoenolpyruvate: step 6/7. Functionally, catalyzes the transfer of the enolpyruvyl moiety of phosphoenolpyruvate (PEP) to the 5-hydroxyl of shikimate-3-phosphate (S3P) to produce enolpyruvyl shikimate-3-phosphate and inorganic phosphate. The chain is 3-phosphoshikimate 1-carboxyvinyltransferase from Clostridium botulinum (strain Alaska E43 / Type E3).